A 624-amino-acid chain; its full sequence is DNA mismatch repair protein MutL (624 aa).

It belongs to the DNA mismatch repair MutL/HexB family.

Functionally, this protein is involved in the repair of mismatches in DNA. It is required for dam-dependent methyl-directed DNA mismatch repair. May act as a 'molecular matchmaker', a protein that promotes the formation of a stable complex between two or more DNA-binding proteins in an ATP-dependent manner without itself being part of a final effector complex. This Xanthomonas campestris pv. campestris (strain B100) protein is DNA mismatch repair protein MutL.